We begin with the raw amino-acid sequence, 61 residues long: Small ribosomal subunit protein uS14 (61 aa).

Cys-24, Cys-27, Cys-40, and Cys-43 together coordinate Zn(2+).

Belongs to the universal ribosomal protein uS14 family. Zinc-binding uS14 subfamily. Part of the 30S ribosomal subunit. Contacts proteins S3 and S10. Zn(2+) is required as a cofactor.

Functionally, binds 16S rRNA, required for the assembly of 30S particles and may also be responsible for determining the conformation of the 16S rRNA at the A site. This is Small ribosomal subunit protein uS14 from Streptococcus equi subsp. zooepidemicus (strain H70).